A 245-amino-acid chain; its full sequence is tRNA1(Val) (adenine(37)-N6)-methyltransferase (245 aa).

The protein belongs to the methyltransferase superfamily. tRNA (adenine-N(6)-)-methyltransferase family.

The protein localises to the cytoplasm. It catalyses the reaction adenosine(37) in tRNA1(Val) + S-adenosyl-L-methionine = N(6)-methyladenosine(37) in tRNA1(Val) + S-adenosyl-L-homocysteine + H(+). Its function is as follows. Specifically methylates the adenine in position 37 of tRNA(1)(Val) (anticodon cmo5UAC). In Shigella dysenteriae serotype 1 (strain Sd197), this protein is tRNA1(Val) (adenine(37)-N6)-methyltransferase.